A 555-amino-acid polypeptide reads, in one-letter code: Transmembrane protein 87B (555 aa).

The first 42 residues, 1–42 (MVAACRSVAGLLPRRRRCFPARAPLLRVALCLLCWTPAAVRA), serve as a signal peptide directing secretion. Residues 43–214 (VPELGLWLET…PHGYISASDW (172 aa)) are Lumenal-facing. Residues Asn-68 and Asn-197 are each glycosylated (N-linked (GlcNAc...) asparagine). Residues 215 to 235 (PLMIFYMVMCIVYILYGILWL) traverse the membrane as a helical segment. The Cytoplasmic segment spans residues 236–247 (TWSACYWKDILR). A helical transmembrane segment spans residues 248–268 (IQFWIAAVIFLGMLEKAVFYS). The Lumenal segment spans residues 269-299 (EYQNISNTGLSTQGLLIFAELISAIKRTLAR). Asn-272 is a glycosylation site (N-linked (GlcNAc...) asparagine). Residues 300–320 (LLVIIVSLGYGIVKPRLGTVM) form a helical membrane-spanning segment. At 321 to 322 (HR) the chain is on the cytoplasmic side. Residues 323–343 (VIGLGLLYLIFAAVEGVMRVI) form a helical membrane-spanning segment. Residues 344–350 (GGSNHLA) lie on the Lumenal side of the membrane. Residues 351–371 (VVLDDIILAVIDSIFVWFIFI) form a helical membrane-spanning segment. Residues 372-396 (SLAQTMKTLRLRKNTVKFSLYRHFK) are Cytoplasmic-facing. The helical transmembrane segment at 397-417 (NTLIFAVLASIVFMGWTTKTF) threads the bilayer. Residues 418 to 429 (RIAKCQSDWMER) are Lumenal-facing. Residues 430–450 (WVDDAFWSFLFSLILIVIMFL) traverse the membrane as a helical segment. Residues 451-555 (WRPSANNQRY…EKMFSSEKIM (105 aa)) lie on the Cytoplasmic side of the membrane. Phosphoserine is present on residues Ser-469, Ser-494, Ser-496, and Ser-534.

This sequence belongs to the LU7TM family. TMEM87 subfamily.

It is found in the golgi apparatus membrane. In terms of biological role, may be involved in retrograde transport from endosomes to the trans-Golgi network (TGN). The polypeptide is Transmembrane protein 87B (Homo sapiens (Human)).